The chain runs to 1537 residues: MTTKRKIIGRLVPCRCFRGEEEIISVLDYSHCSLQQVPKEVFNFERTLEELYLDANQIEELPKQLFNCQALRKLSIPDNDLSNLPTTIASLVNLKELDISKNGVQEFPENIKCCKCLTIIEASVNPISKLPDGFTQLLNLTQLYLNDAFLEFLPANFGRLVKLRILELRENHLKTLPKSMHKLAQLERLDLGNNEFGELPEVLDQIQNLRELWMDNNALQVLPGSIGKLKMLVYLDMSKNRIETVDMDISGCEALEDLLLSSNMLQQLPDSIGLLKKLTTLKVDDNQLTMLPNTIGNLSLLEEFDCSCNELESLPSTIGYLHSLRTLAVDENFLPELPREIGSCKNVTVMSLRSNKLEFLPEEIGQMQKLRVLNLSDNRLKNLPFSFTKLKELAALWLSDNQSKALIPLQTEAHPETKQRVLTNYMFPQQPRGDEDFQSDSDSFNPTLWEEQRQQRMTVAFEFEDKKEDDENAGKVKDLSCQAPWERGQRGITLQPARLSGDCCTPWARCDQQIQDMPVPQNDPQLAWGCISGLQQERSMCTPLPVAAQSTTLPSLSGRQVEINLKRYPTPYPEDLKNMVKSVQNLVGKPSHGVRVENSNPTANTEQTVKEKYEHKWPVAPKEITVEDSFVHPANEMRIGELHPSLAETPLYPPKLVLLGKDKKESTDESEVDKTHCLNNSVSSGTYSDYSPSQASSGSSNTRVKVGSLQTTAKDAVHNSLWGNRIAPSFPQPLDSKPLLSQREAVPPGNIPQRPDRLPMSDTFTDNWTDGSHYDNTGFVAEETTAENANSNPLLSSKSRSTSSHGRRPLIRQDRIVGVPLELEQSTHRHTPETEVPPSNPWQNWTRTPSPFEDRTAFPSKLETTPTTSPLPERKEHIKESTEIPSPFSPGVPWEYHDSNPNRSLSNVFSQIHCRPESSKGVISISKSTERLSPLMKDIKSNKFKKSQSIDEIDIGTYKVYNIPLENYASGSDHLGSHERPDKMLGPEHGMSSMSRSQSVPMLDDEMLTYGSSKGPQQQKASMTKKVYQFDQSFNPQGSVEVKAEKRIPPPFQHNPEYVQQASKNIAKDLISPRAYRGYPPMEQMFSFSQPSVNEDAVVNAQFASQGARAGFLRRADSLVSATEMAMFRRVNEPHELPPTDRYGRPPYRGGLDRQSSVTVTESQFLKRNGRYEDEHPSYQEVKAQAGSFPVKNLTQRRPLSARSYSTESYGASQTRPVSARPTMAALLEKIPSDYNLGNYGDKPSDNSDLKTRPTPVKGEESCGKMPADWRQQLLRHIEARRLDRNAAYKHNTVNLGMLPYGGISAMHAGRSMTLNLQTKSKFDHQELPLQKTPSQQSNILDNGQEDVSPSGQWNPYPLGRRDVPPDTITKKAGSHIQTLMGSQSLQHRSREQQPYEGNINKVTIQQFQSPLPIQIPSSQATRGPQPGRCLIQTKGQRSMDGYPEQFCVRIEKNPGLGFSISGGISGQGNPFKPSDKGIFVTRVQPDGPASNLLQPGDKILQANGHSFVHMEHEKAVLLLKSFQNTVDLVIQRELTV.

17 LRR repeats span residues 23–44, 47–68, 70–91, 93–114, 116–137, 139–161, 162–183, 185–206, 208–229, 231–253, 254–275, 277–298, 300–321, 323–344, 346–367, 369–391, and 392–413; these read IISVLDYSHCSLQQVPKEVFNF, TLEELYLDANQIEELPKQLFNC, ALRKLSIPDNDLSNLPTTIASL, NLKELDISKNGVQEFPENIKCC, CLTIIEASVNPISKLPDGFTQL, NLTQLYLNDAFLEFLPANFGRLV, KLRILELRENHLKTLPKSMHKL, QLERLDLGNNEFGELPEVLDQI, NLRELWMDNNALQVLPGSIGKL, MLVYLDMSKNRIETVDMDISGCE, ALEDLLLSSNMLQQLPDSIGLL, KLTTLKVDDNQLTMLPNTIGNL, LLEEFDCSCNELESLPSTIGYL, SLRTLAVDENFLPELPREIGSC, NVTVMSLRSNKLEFLPEEIGQM, KLRVLNLSDNRLKNLPFSFTKLK, and ELAALWLSDNQSKALIPLQTEA. Residues Ser439, Ser441, and Ser443 each carry the phosphoserine modification. Over residues 663 to 676 the composition is skewed to basic and acidic residues; that stretch reads KKESTDESEVDKTH. Disordered stretches follow at residues 663-709, 730-759, 786-810, and 824-892; these read KKES…VGSL, FPQPLDSKPLLSQREAVPPGNIPQRPDRLP, AENANSNPLLSSKSRSTSSHGRRPL, and EQST…SPGV. Positions 677-709 are enriched in polar residues; it reads CLNNSVSSGTYSDYSPSQASSGSSNTRVKVGSL. Residues 790-804 show a composition bias toward low complexity; that stretch reads NSNPLLSSKSRSTSS. Thr831 bears the Phosphothreonine mark. Position 850 is a phosphoserine (Ser850). The span at 859–871 shows a compositional bias: low complexity; the sequence is PSKLETTPTTSPL. Phosphothreonine is present on Thr865. Ser869 is subject to Phosphoserine. Basic and acidic residues predominate over residues 872-882; sequence PERKEHIKEST. A phosphoserine mark is found at Ser947, Ser949, and Ser1118. A disordered region spans residues 1136–1159; sequence ELPPTDRYGRPPYRGGLDRQSSVT. Arg1149 is modified (omega-N-methylarginine). Residue Ser1233 is modified to Phosphoserine. 2 disordered regions span residues 1234-1265 and 1331-1360; these read DYNLGNYGDKPSDNSDLKTRPTPVKGEESCGK and QKTPSQQSNILDNGQEDVSPSGQWNPYPLG. Basic and acidic residues predominate over residues 1243–1263; it reads KPSDNSDLKTRPTPVKGEESC. Residues 1332-1354 are compositionally biased toward polar residues; it reads KTPSQQSNILDNGQEDVSPSGQW. A phosphoserine mark is found at Ser1335 and Ser1439. In terms of domain architecture, PDZ spans 1445–1535; that stretch reads EQFCVRIEKN…TVDLVIQREL (91 aa).

Belongs to the LAP (LRR and PDZ) protein family. As to quaternary structure, interacts with CNKSR2 and DLG4. Interacts with CTNND2/Catenin delta-2. Forms a complex with N-cadherin through CTNND2. Interacts with CAMK2A. As to expression, brain-specific. Isoform 3 is ubiquitously expressed.

Its subcellular location is the cytoplasm. The protein localises to the postsynaptic density. In terms of biological role, required for normal synaptic spine architecture and function. Necessary for DISC1 and GRM5 localization to postsynaptic density complexes and for both N-methyl D-aspartate receptor-dependent and metabotropic glutamate receptor-dependent long term depression. The chain is Leucine-rich repeat-containing protein 7 (LRRC7) from Homo sapiens (Human).